Reading from the N-terminus, the 97-residue chain is Sperm protein associated with the nucleus on the X chromosome A (97 aa).

The interval 1 to 49 (MDKQSSAGGVKRSVPCDSNEANEMMPETPTGDSDPQPAPKKMKTSESST) is disordered. Positions 37–45 (PAPKKMKTS) match the Nuclear localization signal motif.

The protein belongs to the SPAN-X family. Detected in testis and sperm.

The protein localises to the cytoplasm. It localises to the nucleus. In Homo sapiens (Human), this protein is Sperm protein associated with the nucleus on the X chromosome A.